Reading from the N-terminus, the 159-residue chain is SsrA-binding protein (159 aa).

This sequence belongs to the SmpB family.

Its subcellular location is the cytoplasm. Its function is as follows. Required for rescue of stalled ribosomes mediated by trans-translation. Binds to transfer-messenger RNA (tmRNA), required for stable association of tmRNA with ribosomes. tmRNA and SmpB together mimic tRNA shape, replacing the anticodon stem-loop with SmpB. tmRNA is encoded by the ssrA gene; the 2 termini fold to resemble tRNA(Ala) and it encodes a 'tag peptide', a short internal open reading frame. During trans-translation Ala-aminoacylated tmRNA acts like a tRNA, entering the A-site of stalled ribosomes, displacing the stalled mRNA. The ribosome then switches to translate the ORF on the tmRNA; the nascent peptide is terminated with the 'tag peptide' encoded by the tmRNA and targeted for degradation. The ribosome is freed to recommence translation, which seems to be the essential function of trans-translation. The polypeptide is SsrA-binding protein (Salinispora tropica (strain ATCC BAA-916 / DSM 44818 / JCM 13857 / NBRC 105044 / CNB-440)).